Consider the following 460-residue polypeptide: Probable Xaa-Pro aminopeptidase VDBG_02538 (460 aa).

Positions 256, 267, 390, and 430 each coordinate Mn(2+).

Belongs to the peptidase M24B family. Requires Mn(2+) as cofactor.

It catalyses the reaction Release of any N-terminal amino acid, including proline, that is linked to proline, even from a dipeptide or tripeptide.. Functionally, catalyzes the removal of a penultimate prolyl residue from the N-termini of peptides. This is Probable Xaa-Pro aminopeptidase VDBG_02538 from Verticillium alfalfae (strain VaMs.102 / ATCC MYA-4576 / FGSC 10136) (Verticillium wilt of alfalfa).